A 218-amino-acid chain; its full sequence is Cytidylate kinase (218 aa).

11–19 lines the ATP pocket; it reads GPSGVGKST.

This sequence belongs to the cytidylate kinase family. Type 1 subfamily.

It localises to the cytoplasm. It carries out the reaction CMP + ATP = CDP + ADP. It catalyses the reaction dCMP + ATP = dCDP + ADP. In Mycoplasmopsis synoviae (strain 53) (Mycoplasma synoviae), this protein is Cytidylate kinase.